Consider the following 84-residue polypeptide: Toxin To10 (84 aa).

A signal peptide spans 1-19 (MNYSTLIAVASLLTAGTES). Residues 21–80 (KDGYPVEGSCAFPCGYDNAYCDKLCKERKADSGYCYWVNILCYCYGLPDNAAIKGYGRCK) form the LCN-type CS-alpha/beta domain. 4 cysteine pairs are disulfide-bonded: cysteine 30–cysteine 79, cysteine 34–cysteine 55, cysteine 41–cysteine 62, and cysteine 45–cysteine 64. Residue proline 81 is modified to Proline amide.

The protein belongs to the long (4 C-C) scorpion toxin superfamily. Sodium channel inhibitor family. Alpha subfamily. In terms of tissue distribution, expressed by the venom gland.

It localises to the secreted. Functionally, alpha toxins bind voltage-independently at site-3 of sodium channels (Nav) and inhibit the inactivation of the activated channels, thereby blocking neuronal transmission. The sequence is that of Toxin To10 from Tityus obscurus (Amazonian scorpion).